The sequence spans 431 residues: Aspartokinase (431 aa).

This sequence belongs to the aspartokinase family.

It carries out the reaction L-aspartate + ATP = 4-phospho-L-aspartate + ADP. It functions in the pathway amino-acid biosynthesis; L-lysine biosynthesis via DAP pathway; (S)-tetrahydrodipicolinate from L-aspartate: step 1/4. It participates in amino-acid biosynthesis; L-methionine biosynthesis via de novo pathway; L-homoserine from L-aspartate: step 1/3. The protein operates within amino-acid biosynthesis; L-threonine biosynthesis; L-threonine from L-aspartate: step 1/5. The polypeptide is Aspartokinase (lysC) (Chlamydia trachomatis serovar D (strain ATCC VR-885 / DSM 19411 / UW-3/Cx)).